Consider the following 395-residue polypeptide: Subtilisin-like protease 5 (395 aa).

Positions 1 to 19 (MGFLTVLYLSLAALSVTNA) are cleaved as a signal peptide. Residues 20 to 115 (AQIMSAPNGA…VEPDAIISQH (96 aa)) constitute a propeptide that is removed on maturation. One can recognise an Inhibitor I9 domain in the interval 36 to 112 (YIVVMKDDTS…VAFVEPDAII (77 aa)). One can recognise a Peptidase S8 domain in the interval 124-395 (PWGLSRLSNR…RRLLYNGSGR (272 aa)). Active-site charge relay system residues include Asp-155 and His-186. 2 N-linked (GlcNAc...) asparagine glycosylation sites follow: Asn-229 and Asn-247. Ser-341 acts as the Charge relay system in catalysis. Residues 374–395 (QPTIHNPGPDTTRRLLYNGSGR) form a disordered region. N-linked (GlcNAc...) asparagine glycosylation is present at Asn-391.

This sequence belongs to the peptidase S8 family.

The protein resides in the secreted. Its function is as follows. Secreted subtilisin-like serine protease with keratinolytic activity that contributes to pathogenicity. This Arthroderma otae (strain ATCC MYA-4605 / CBS 113480) (Microsporum canis) protein is Subtilisin-like protease 5 (SUB5).